A 172-amino-acid chain; its full sequence is Shikimate kinase (172 aa).

12–17 is an ATP binding site; that stretch reads GSGKTS. Residue threonine 16 participates in Mg(2+) binding. 3 residues coordinate substrate: aspartate 34, arginine 58, and glycine 81. ATP is bound at residue arginine 122. Arginine 139 contributes to the substrate binding site.

The protein belongs to the shikimate kinase family. Monomer. Mg(2+) serves as cofactor.

The protein localises to the cytoplasm. It carries out the reaction shikimate + ATP = 3-phosphoshikimate + ADP + H(+). It functions in the pathway metabolic intermediate biosynthesis; chorismate biosynthesis; chorismate from D-erythrose 4-phosphate and phosphoenolpyruvate: step 5/7. Its function is as follows. Catalyzes the specific phosphorylation of the 3-hydroxyl group of shikimic acid using ATP as a cosubstrate. In Dictyoglomus turgidum (strain DSM 6724 / Z-1310), this protein is Shikimate kinase.